Here is a 515-residue protein sequence, read N- to C-terminus: Maturase K (515 aa).

It belongs to the intron maturase 2 family. MatK subfamily.

It localises to the plastid. Its subcellular location is the chloroplast. Its function is as follows. Usually encoded in the trnK tRNA gene intron. Probably assists in splicing its own and other chloroplast group II introns. The sequence is that of Maturase K from Pinus luchuensis (Ryukyu island pine).